We begin with the raw amino-acid sequence, 207 residues long: MYSAPSACTCLCLHFLLLCFQVQVLVAEENVDFRIHVENQTRARDDVSRKQLRLYQLYSRTSGKHIQVLGRRISARGEDGDKYAQLLVETDTFGSQVRIKGKETEFYLCMNRKGKLVGKPDGTSKECVFIEKVLENNYTALMSAKYSGWYVGFTKKGRPRKGPKTRENQQDVHFMKRYPKGQPELQKPFKYTTVTKRSRRIRPTHPA.

The signal sequence occupies residues 1 to 27; sequence MYSAPSACTCLCLHFLLLCFQVQVLVA. A glycan (N-linked (GlcNAc...) asparagine) is linked at N39. A disulfide bridge connects residues C109 and C127. N137 is a glycosylation site (N-linked (GlcNAc...) asparagine). The interval 157–186 is disordered; it reads GRPRKGPKTRENQQDVHFMKRYPKGQPELQ. The span at 164–174 shows a compositional bias: basic and acidic residues; it reads KTRENQQDVHF.

Belongs to the heparin-binding growth factors family. Interacts with FGFR3 and FGFR4.

It localises to the secreted. In terms of biological role, plays an important role in the regulation of cell proliferation, cell differentiation and cell migration. Required for normal ossification and bone development. Stimulates hepatic and intestinal proliferation. The sequence is that of Fibroblast growth factor 18 (FGF18) from Homo sapiens (Human).